A 179-amino-acid polypeptide reads, in one-letter code: NAD(P)H-quinone oxidoreductase subunit I, chloroplastic (179 aa).

2 4Fe-4S ferredoxin-type domains span residues 55–84 (GRIHFEFDKCIACEVCVRVCPIDLPVVDWR) and 95–124 (LNYSIDFGICIFCGNCVEYCPTNCLSMTEE). C64, C67, C70, C74, C104, C107, C110, and C114 together coordinate [4Fe-4S] cluster.

Belongs to the complex I 23 kDa subunit family. As to quaternary structure, NDH is composed of at least 16 different subunits, 5 of which are encoded in the nucleus. It depends on [4Fe-4S] cluster as a cofactor.

The protein resides in the plastid. Its subcellular location is the chloroplast thylakoid membrane. It carries out the reaction a plastoquinone + NADH + (n+1) H(+)(in) = a plastoquinol + NAD(+) + n H(+)(out). It catalyses the reaction a plastoquinone + NADPH + (n+1) H(+)(in) = a plastoquinol + NADP(+) + n H(+)(out). In terms of biological role, NDH shuttles electrons from NAD(P)H:plastoquinone, via FMN and iron-sulfur (Fe-S) centers, to quinones in the photosynthetic chain and possibly in a chloroplast respiratory chain. The immediate electron acceptor for the enzyme in this species is believed to be plastoquinone. Couples the redox reaction to proton translocation, and thus conserves the redox energy in a proton gradient. This chain is NAD(P)H-quinone oxidoreductase subunit I, chloroplastic, found in Nuphar advena (Common spatterdock).